The sequence spans 117 residues: Protein SMALL AUXIN UP-REGULATED RNA 54 (117 aa).

This sequence belongs to the ARG7 family. In terms of tissue distribution, expressed in trichomes. Hardly observed in leaves.

Its subcellular location is the cell membrane. Its function is as follows. Provide a mechanistic link between auxin and plasma membrane H(+)-ATPases (PM H(+)-ATPases, e.g. AHA1 and AHA2), and triggers PM H(+)-ATPases activity by promoting phosphorylation of their C-terminal autoinhibitory domain as a result of PP2C-D subfamily of type 2C phosphatases inhibition, thus leading to the acidification of the apoplast and the facilitation of solutes and water uptake to drive cell expansion. Triggers plant growth probably by promoting cell elongation. Regulates branch angles and bending. The protein is Protein SMALL AUXIN UP-REGULATED RNA 54 of Arabidopsis thaliana (Mouse-ear cress).